The primary structure comprises 112 residues: Large ribosomal subunit protein eL36y (112 aa).

Basic residues predominate over residues 79–88 (KLGTHKRAKR). The disordered stretch occupies residues 79-112 (KLGTHKRAKRKREEMSSVLRKMRSGGGGATEKKK). Over residues 102–112 (SGGGGATEKKK) the composition is skewed to gly residues.

The protein belongs to the eukaryotic ribosomal protein eL36 family.

In Arabidopsis thaliana (Mouse-ear cress), this protein is Large ribosomal subunit protein eL36y (RPL36B).